A 248-amino-acid polypeptide reads, in one-letter code: MAGHSKWANIKHRKERQDAKRGKIFTKWIRELTVAARQGGGDPGSNPRLRLALDKALGANMSRDIIDRAVARGAGATEADNVEELTYEGYGPGGVAVMVECMTDNRNRTAAAVRHAFSKCGGNLGTDGSVAYLFERKGQISFAPGVDEDALTEAALEADADDVVSHEDGSIDVFTSFTSFYAVRNALEAAGFKGDDAEIVMQPTTSAELDLEGAEKVLKLIDMLEDLDDVQNVYSNADIPEDVAAQLG.

Belongs to the TACO1 family.

Its subcellular location is the cytoplasm. The polypeptide is Probable transcriptional regulatory protein Pfl01_4410 (Pseudomonas fluorescens (strain Pf0-1)).